Consider the following 157-residue polypeptide: Arginine regulator (157 aa).

It belongs to the ArgR family.

It localises to the cytoplasm. It functions in the pathway amino-acid degradation; L-arginine degradation via ADI pathway. Its function is as follows. Regulates the transcription of the arc operon, involved in arginine catabolism. This chain is Arginine regulator (argR1), found in Streptococcus pyogenes serotype M3 (strain ATCC BAA-595 / MGAS315).